The primary structure comprises 131 residues: MSMSDPIADMLTRIRNAQMVEKVSVSMPSSKVKVAIAQVLKDEGYIDDFAVKADGAKAELNIALKYYAGRPVIERLERVSKPGLRVYRGRNEIPQVMNGLGVAIVSTPKGVMTDRKARATGVGGEVICYVA.

It belongs to the universal ribosomal protein uS8 family. Part of the 30S ribosomal subunit. Contacts proteins S5 and S12.

In terms of biological role, one of the primary rRNA binding proteins, it binds directly to 16S rRNA central domain where it helps coordinate assembly of the platform of the 30S subunit. The protein is Small ribosomal subunit protein uS8 of Burkholderia mallei (strain NCTC 10247).